The following is a 378-amino-acid chain: Chaperone protein DnaJ (378 aa).

The region spanning 5–69 is the J domain; that stretch reads EYYDRLGVSK…QKRAAYDQYG (65 aa). The CR-type zinc finger occupies 134 to 216; sequence GVEKEVSYNR…CHGTGHEKQA (83 aa). Positions 147, 150, 164, 167, 190, 193, 204, and 207 each coordinate Zn(2+). 4 CXXCXGXG motif repeats span residues 147 to 154, 164 to 171, 190 to 197, and 204 to 211; these read CGTCLGSG, CRKCHGSG, CDICHGSG, and CQTCHGTG.

It belongs to the DnaJ family. Homodimer. It depends on Zn(2+) as a cofactor.

It localises to the cytoplasm. Functionally, participates actively in the response to hyperosmotic and heat shock by preventing the aggregation of stress-denatured proteins and by disaggregating proteins, also in an autonomous, DnaK-independent fashion. Unfolded proteins bind initially to DnaJ; upon interaction with the DnaJ-bound protein, DnaK hydrolyzes its bound ATP, resulting in the formation of a stable complex. GrpE releases ADP from DnaK; ATP binding to DnaK triggers the release of the substrate protein, thus completing the reaction cycle. Several rounds of ATP-dependent interactions between DnaJ, DnaK and GrpE are required for fully efficient folding. Also involved, together with DnaK and GrpE, in the DNA replication of plasmids through activation of initiation proteins. The protein is Chaperone protein DnaJ of Streptococcus pyogenes.